Here is a 328-residue protein sequence, read N- to C-terminus: UPF0285 protein MJ1370 (328 aa).

This sequence belongs to the UPF0285 family.

This is UPF0285 protein MJ1370 from Methanocaldococcus jannaschii (strain ATCC 43067 / DSM 2661 / JAL-1 / JCM 10045 / NBRC 100440) (Methanococcus jannaschii).